The chain runs to 209 residues: Uracil phosphoribosyltransferase (209 aa).

Residues arginine 79, arginine 104, and 131 to 139 (DPMLATGGS) each bind 5-phospho-alpha-D-ribose 1-diphosphate. Uracil-binding positions include isoleucine 194 and 199-201 (GDA). Aspartate 200 provides a ligand contact to 5-phospho-alpha-D-ribose 1-diphosphate.

The protein belongs to the UPRTase family. The cofactor is Mg(2+).

It carries out the reaction UMP + diphosphate = 5-phospho-alpha-D-ribose 1-diphosphate + uracil. The protein operates within pyrimidine metabolism; UMP biosynthesis via salvage pathway; UMP from uracil: step 1/1. With respect to regulation, allosterically activated by GTP. Catalyzes the conversion of uracil and 5-phospho-alpha-D-ribose 1-diphosphate (PRPP) to UMP and diphosphate. The protein is Uracil phosphoribosyltransferase of Streptococcus equi subsp. zooepidemicus (strain MGCS10565).